Reading from the N-terminus, the 1088-residue chain is Myocardin-related transcription factor B (1088 aa).

Position 22 is a phosphoserine (Glu22). The stretch at 40-65 is one RPEL 1 repeat; that stretch reads EVLQLRLQQRRTREQLVDQGIMPPLK. Position 66 is a phosphoserine (Ser66). 2 RPEL repeats span residues 84–109 and 128–153; these read NFLK…EETF and DDLN…PVDS. Disordered regions lie at residues 165-310, 349-389, 472-508, and 528-553; these read EDYP…NEPQ, KPLN…PSSL, AELP…STDD, and LSSS…SNLE. Residues 197–213 show a composition bias toward low complexity; that stretch reads SAASPSEPKVSESPSPV. Polar residues predominate over residues 214 to 226; sequence TTNTPAQFASVSP. Residues 238–248 are compositionally biased toward pro residues; sequence ADQPPPRPAAP. Basic and acidic residues predominate over residues 272–287; sequence NPNDKHRSKKCKDPKP. Low complexity predominate over residues 355 to 366; it reads NSNSGNSALNNA. Residues Thr367 and Thr370 each carry the phosphothreonine modification. Over residues 367-378 the composition is skewed to polar residues; the sequence is TPNTPRQNTSTP. Positions 389–423 constitute an SAP domain; the sequence is LDDLKVSELKTELKLRGLPVSGTKPDLIERLKPYQ. The span at 528 to 540 shows a compositional bias: polar residues; that stretch reads LSSSPLRMTNNED. 2 positions are modified to phosphoserine: Ser541 and Ser543. Over residues 541–550 the composition is skewed to low complexity; it reads SLSPTSSTLS. A coiled-coil region spans residues 545-601; the sequence is TSSTLSNLELDAAEKDRKLQEKEKQIEELKRKLEQEQKLVEVLKMQLEVEKRGQQQR. Residues 563 to 591 form a required for interaction with itself and with MRTFA region; the sequence is LQEKEKQIEELKRKLEQEQKLVEVLKMQL. 2 disordered regions span residues 595-655 and 829-886; these read KRGQ…QPVS and NAPL…STQA. Lys628 is covalently cross-linked (Glycyl lysine isopeptide (Lys-Gly) (interchain with G-Cter in SUMO1)). Residues 829 to 838 are compositionally biased toward polar residues; sequence NAPLPSLQNG. Residues 867–879 are compositionally biased toward basic and acidic residues; that stretch reads KTKDPPRYEEAIK. Phosphoserine is present on Ser921.

In terms of assembly, interacts with MRTFA and SRF. Post-translationally, O-glycosylated.

It is found in the nucleus. In terms of biological role, acts as a transcriptional coactivator of serum response factor (SRF). Required for skeletal myogenic differentiation. The sequence is that of Myocardin-related transcription factor B from Homo sapiens (Human).